A 317-amino-acid chain; its full sequence is HTH-type transcriptional regulator CfxR (317 aa).

Positions 8-65 constitute an HTH lysR-type domain; it reads LTLRQLQIFVTVARHASFVRAAEELHLTQPAVSMQVKQLESVVGMALFERVKGQLTLT. The segment at residues 25-44 is a DNA-binding region (H-T-H motif); it reads FVRAAEELHLTQPAVSMQVK.

This sequence belongs to the LysR transcriptional regulatory family.

Trans-acting transcriptional regulator of RuBisCO genes (cfxLS) expression. This is HTH-type transcriptional regulator CfxR (cfxR) from Cupriavidus necator (strain ATCC 17699 / DSM 428 / KCTC 22496 / NCIMB 10442 / H16 / Stanier 337) (Ralstonia eutropha).